We begin with the raw amino-acid sequence, 56 residues long: Large ribosomal subunit protein bL33 (56 aa).

Belongs to the bacterial ribosomal protein bL33 family.

This is Large ribosomal subunit protein bL33 from Campylobacter hominis (strain ATCC BAA-381 / DSM 21671 / CCUG 45161 / LMG 19568 / NCTC 13146 / CH001A).